The sequence spans 568 residues: Malate synthase, glyoxysomal (568 aa).

Residues 1 to 20 are disordered; sequence MGSLGMYSESGLTKKGSSRG. Arginine 183 acts as the Proton acceptor in catalysis. Aspartate 469 acts as the Proton donor in catalysis. Residues 566-568 carry the Microbody targeting signal motif; it reads SKL.

This sequence belongs to the malate synthase family.

The protein localises to the glyoxysome. It catalyses the reaction glyoxylate + acetyl-CoA + H2O = (S)-malate + CoA + H(+). The protein operates within carbohydrate metabolism; glyoxylate cycle; (S)-malate from isocitrate: step 2/2. This Cucumis sativus (Cucumber) protein is Malate synthase, glyoxysomal.